Reading from the N-terminus, the 371-residue chain is Tetraacyldisaccharide 4'-kinase (371 aa).

Alanine 63–threonine 70 lines the ATP pocket.

It belongs to the LpxK family.

It catalyses the reaction a lipid A disaccharide + ATP = a lipid IVA + ADP + H(+). Its pathway is glycolipid biosynthesis; lipid IV(A) biosynthesis; lipid IV(A) from (3R)-3-hydroxytetradecanoyl-[acyl-carrier-protein] and UDP-N-acetyl-alpha-D-glucosamine: step 6/6. Transfers the gamma-phosphate of ATP to the 4'-position of a tetraacyldisaccharide 1-phosphate intermediate (termed DS-1-P) to form tetraacyldisaccharide 1,4'-bis-phosphate (lipid IVA). The protein is Tetraacyldisaccharide 4'-kinase of Anaeromyxobacter sp. (strain Fw109-5).